We begin with the raw amino-acid sequence, 437 residues long: Serine hydroxymethyltransferase 2 (437 aa).

(6S)-5,6,7,8-tetrahydrofolate-binding positions include Leu-125 and 129 to 131 (GHL). At Lys-234 the chain carries N6-(pyridoxal phosphate)lysine.

The protein belongs to the SHMT family. As to quaternary structure, homodimer. Pyridoxal 5'-phosphate serves as cofactor.

It is found in the cytoplasm. The enzyme catalyses (6R)-5,10-methylene-5,6,7,8-tetrahydrofolate + glycine + H2O = (6S)-5,6,7,8-tetrahydrofolate + L-serine. The protein operates within one-carbon metabolism; tetrahydrofolate interconversion. Its pathway is amino-acid biosynthesis; glycine biosynthesis; glycine from L-serine: step 1/1. Catalyzes the reversible interconversion of serine and glycine with tetrahydrofolate (THF) serving as the one-carbon carrier. This reaction serves as the major source of one-carbon groups required for the biosynthesis of purines, thymidylate, methionine, and other important biomolecules. Also exhibits THF-independent aldolase activity toward beta-hydroxyamino acids, producing glycine and aldehydes, via a retro-aldol mechanism. This chain is Serine hydroxymethyltransferase 2, found in Mesorhizobium japonicum (strain LMG 29417 / CECT 9101 / MAFF 303099) (Mesorhizobium loti (strain MAFF 303099)).